Reading from the N-terminus, the 414-residue chain is MESRVLTGGATAIRGGLPLLRKPAAVMKFTTAAHAISRDFPAGAVTAKPVGPLIAGPNLIWGRQLRPAILLETSPKRESIKPCSAAASSSAGSSDSSGDAKVGFFNKATLTTGFFFFMWYFLNVIFNILNKKIYNYFPYPYFVSVIHLAVGVVYCLVSWGVGLPKRAPIDSTQLKLLTPVAFCHALGHVTSNVSFAAVRVSFTHTVKALEPFFNAAASQFILGQQIPLALWLSLAPVVLGVSMASLTELSFNWLGFTSAMISNISFTYRSIYSKKAMTDMDSTNVYAYISIIALIFCLPPAIFIEGPQLLQHGFNDAIAKVGLTKFVTDLFWVGMFYHLYNQVATNTLERVAPLTHAVGNVLKRVFVIGFSIVIFGNKISTQTGIGTCIAIAGVAIYSFIKAKMEEEKRQKKAA.

The N-terminal 78 residues, 1 to 78, are a transit peptide targeting the chloroplast; sequence MESRVLTGGA…ILLETSPKRE (78 aa). The Chloroplast intermembrane portion of the chain corresponds to 79–108; that stretch reads SIKPCSAAASSSAGSSDSSGDAKVGFFNKA. Residues 109-129 form a helical membrane-spanning segment; that stretch reads TLTTGFFFFMWYFLNVIFNIL. Residues 130–141 are Lumenal-facing; sequence NKKIYNYFPYPY. The chain crosses the membrane as a helical span at residues 142 to 162; the sequence is FVSVIHLAVGVVYCLVSWGVG. Residues 163–219 lie on the Chloroplast intermembrane side of the membrane; that stretch reads LPKRAPIDSTQLKLLTPVAFCHALGHVTSNVSFAAVRVSFTHTVKALEPFFNAAASQ. Residues 220-240 traverse the membrane as a helical segment; the sequence is FILGQQIPLALWLSLAPVVLG. Over 241-284 the chain is Lumenal; it reads VSMASLTELSFNWLGFTSAMISNISFTYRSIYSKKAMTDMDSTN. The chain crosses the membrane as a helical span at residues 285–304; sequence VYAYISIIALIFCLPPAIFI. At 305-382 the chain is on the chloroplast intermembrane side; it reads EGPQLLQHGF…VIFGNKISTQ (78 aa). A helical transmembrane segment spans residues 383–403; that stretch reads TGIGTCIAIAGVAIYSFIKAK. At 404–414 the chain is on the lumenal side; the sequence is MEEEKRQKKAA.

It belongs to the TPT transporter family. TPT (TC 2.A.7.9) subfamily.

It localises to the plastid. Its subcellular location is the chloroplast membrane. Functionally, mediates the export of fixed carbons from the chloroplasts into the cytosol in the form of triose phosphates. The sequence is that of Triose phosphate/phosphate translocator, chloroplastic (TPT) from Solanum tuberosum (Potato).